The sequence spans 330 residues: MKLALDGMGGDNAPKSVIEGALLALEQIPNLEIQLYGQQEKLEPFLKQHDRLTIVPCEEVVEGTDDPARAVRRKKDSSMARMMDAVDEGRADACLSAGNTGALMAGGLFKVGRIEGIARPALATTLPTLDGKGFLMLDLGANADARPEHLVPYAIMGDIYAKKVGGLQKPRIGLLNIGTEDKKGNELTKATFDLLKEANLNFIGNVEARDLLEGVADVVVTDGFTGNMVLKSIEGTAGALFSMLKEAFMSSTKTKISAVLMKNNLRDLKHKMDYTEYGGAGLFGLQAPVIKAHGSSNAKAIFSAIRQANTMVEHTVISTITETVRHIEID.

The protein belongs to the PlsX family. Homodimer. Probably interacts with PlsY.

It localises to the cytoplasm. The enzyme catalyses a fatty acyl-[ACP] + phosphate = an acyl phosphate + holo-[ACP]. It participates in lipid metabolism; phospholipid metabolism. Functionally, catalyzes the reversible formation of acyl-phosphate (acyl-PO(4)) from acyl-[acyl-carrier-protein] (acyl-ACP). This enzyme utilizes acyl-ACP as fatty acyl donor, but not acyl-CoA. The polypeptide is Phosphate acyltransferase (Lysinibacillus sphaericus (strain C3-41)).